The chain runs to 305 residues: Tyrosine recombinase XerC (305 aa).

The Core-binding (CB) domain maps to 2–88; that stretch reads NQLELYIDTF…TLRSFYRFLE (87 aa). The Tyr recombinase domain maps to 109–294; sequence PVPGFLYQEE…TKDHLREAYM (186 aa). Catalysis depends on residues R149, K173, H246, R249, and H272. Catalysis depends on Y281, which acts as the O-(3'-phospho-DNA)-tyrosine intermediate.

This sequence belongs to the 'phage' integrase family. XerC subfamily. In terms of assembly, forms a cyclic heterotetrameric complex composed of two molecules of XerC and two molecules of XerD.

Its subcellular location is the cytoplasm. Its function is as follows. Site-specific tyrosine recombinase, which acts by catalyzing the cutting and rejoining of the recombining DNA molecules. The XerC-XerD complex is essential to convert dimers of the bacterial chromosome into monomers to permit their segregation at cell division. It also contributes to the segregational stability of plasmids. The sequence is that of Tyrosine recombinase XerC from Oceanobacillus iheyensis (strain DSM 14371 / CIP 107618 / JCM 11309 / KCTC 3954 / HTE831).